A 259-amino-acid polypeptide reads, in one-letter code: MPRSFLVKKHFSASKKPNYSELESQTVYISPFIYDKFPVIPQPEILSTGAYYTPLVWDTGLLTTFFTSESDYKKSPISPSSSDDSSKPLDLTSFSSEDEGGKTSDPPSPASSATEAEKFQCNLCSKSYSTFAGLSKHKQLHCDSQTRKSFSCKYCEKEYVSLGALKMHIRSHTLPCVCKICGKAFSRPWLLQGHIRTHTGEKPFSCTHCNRAFADRSNLRAHLQTHSDVKKYQCKSCSRTFSRMSLLHKHEETGCTVAH.

The segment at 1 to 20 (MPRSFLVKKHFSASKKPNYS) is SNAG domain. A disordered region spans residues 71-113 (DYKKSPISPSSSDDSSKPLDLTSFSSEDEGGKTSDPPSPASSA). 5 C2H2-type zinc fingers span residues 119–141 (FQCNLCSKSYSTFAGLSKHKQLH), 150–172 (FSCKYCEKEYVSLGALKMHIRSH), 176–198 (CVCKICGKAFSRPWLLQGHIRTH), 204–226 (FSCTHCNRAFADRSNLRAHLQTH), and 232–255 (YQCKSCSRTFSRMSLLHKHEETGC).

It belongs to the snail C2H2-type zinc-finger protein family. In terms of assembly, interacts (via SNAG domain) with limd1 (via LIM domains), wtip (via LIM domains) and ajuba (via LIM domains). Interacts with elp3; the interaction inhibits snai1 ubiquitination and promotes snai1 stability. Ubiquitinated. In terms of tissue distribution, maternal expression is nearly completely restricted to the vegetal hemisphere. Zygotic expression begins in the dorsal marginal zone just before gastrulation (stage 9), and is almost completely absent in the animal hemisphere. At mid-gastrula (stage 11-11.5), expression begins in the ectoderm in an arc surrounding the prospective neural plate. From stage 12, anterior expression is down-regulated, while levels are increased in the prospective neural crest.

The protein resides in the nucleus. Transcriptional repressor. Acts upstream of snai2/slug, zic5 and other neural crest markers in the specification of the neural crest and neural crest migration. Involved in embryonic mesoderm formation. In Xenopus laevis (African clawed frog), this protein is Protein snail homolog Sna (snai1).